A 514-amino-acid polypeptide reads, in one-letter code: MKDQVIIFDTTLRDGEQALSASLTVKEKLQIAYALERLGVDVIEAGFPISSPGDFESVQTIAKHIKNSRVCALSRAVAKDIDVAAESLKVAEAFRIHTFISTSTIHVQDKLRRSYDDVIEMAIAAVKRARNYTDDVEFSCEDAGRTPIDNLCRMVEAAINAGARTINIPDTVGYTLPSEFGGIVAQLFNRVPNIDKAIISVHCHDDLGMSVANSMAAVQAGARQVEGTINGLGERAGNCSLEEIAMIIKTRSDFLGVETNIKHEEIHRTSKMVSQLCNMPIQANKAIVGANAFNHSSGIHQDGMIKNKNTYEIMTPESIGLKSQALNLTSRSGRAAVKNHMDTLGYIDGDYNLDTLYADFLKLADRKGQVFDYDLEALMYFANLRDEDDFFKLNYLSVQSGSIMATTSIKLQCGDEEKCEAAVGNGPVDALYQCIYRLTGYEIALDKFDLTAKGEGEDGLGQADIIANYKGRKYHGTGLATDIVEASGQALLHVINSIYRADQIAEIKERIATV.

Positions 5–267 (VIIFDTTLRD…ETNIKHEEIH (263 aa)) constitute a Pyruvate carboxyltransferase domain. 4 residues coordinate Mn(2+): aspartate 14, histidine 202, histidine 204, and asparagine 238. A regulatory domain region spans residues 392-514 (KLNYLSVQSG…AEIKERIATV (123 aa)).

The protein belongs to the alpha-IPM synthase/homocitrate synthase family. LeuA type 1 subfamily. Homodimer. It depends on Mn(2+) as a cofactor.

Its subcellular location is the cytoplasm. It catalyses the reaction 3-methyl-2-oxobutanoate + acetyl-CoA + H2O = (2S)-2-isopropylmalate + CoA + H(+). It functions in the pathway amino-acid biosynthesis; L-leucine biosynthesis; L-leucine from 3-methyl-2-oxobutanoate: step 1/4. Its function is as follows. Catalyzes the condensation of the acetyl group of acetyl-CoA with 3-methyl-2-oxobutanoate (2-ketoisovalerate) to form 3-carboxy-3-hydroxy-4-methylpentanoate (2-isopropylmalate). This is 2-isopropylmalate synthase from Photobacterium profundum (strain SS9).